The sequence spans 676 residues: Electrogenic aspartate/glutamate antiporter SLC25A12, mitochondrial (676 aa).

Ala-2 carries the N-acetylalanine modification. A regulatory N-terminal domain region spans residues 2-293 (AVKVHTTKRG…TLADIERIAP (292 aa)). Topologically, residues 2 to 328 (AVKVHTTKRG…WLQIAESAYR (327 aa)) are mitochondrial intermembrane. The Ca(2+) site is built by Asp-65, Thr-67, Asp-69, Leu-71, and Glu-76. EF-hand domains follow at residues 65-76 (DQTKDGLISYQE), 86-121 (APDS…TIIH), 125-155 (PFNW…QFLQ), and 157-192 (LQLE…IRSH). The interval 294-309 (LAEGALPYNLAELQRQ) is linker loop domain. A carrier domain region spans residues 319–611 (WLQIAESAYR…RWFYIDFGGL (293 aa)). Solcar repeat units follow at residues 323–415 (AESA…VRDK), 423–507 (IPLP…CKLL), and 515–603 (VGGI…LQRW). Residues 329–346 (FTLGSVAGAVGATAVYPI) traverse the membrane as a helical segment. At 347–389 (DLVKTRMQNQRGTGSVVGELMYKNSFDCFKKVLRYEGFFGLYR) the chain is on the mitochondrial matrix side. Residues 390–409 (GLIPQLIGVAPEKAIKLTVN) traverse the membrane as a helical segment. Topologically, residues 410 to 432 (DFVRDKFTRRDGSIPLPAEILAG) are mitochondrial intermembrane. The helical transmembrane segment at 433–446 (GCAGGSQVIFTNPL) threads the bilayer. The Mitochondrial matrix portion of the chain corresponds to 447–481 (EIVKIRLQVAGEITTGPRVSALNVLQDLGLFGLYK). A helical transmembrane segment spans residues 482–501 (GAKACFLRDIPFSAIYFPVY). Topologically, residues 502-520 (AHCKLLLADENGHVGGINL) are mitochondrial intermembrane. The helical transmembrane segment at 521 to 538 (LTAGAMAGVPAASLVTPA) threads the bilayer. Topologically, residues 539–577 (DVIKTRLQVAARAGQTTYSGVIDCFRKILREEGPSAFWK) are mitochondrial matrix. A helical membrane pass occupies residues 578 to 597 (GTAARVFRSSPQFGVTLVTY). The Mitochondrial intermembrane portion of the chain corresponds to 598–676 (ELLQRWFYID…AQPKVAAAAQ (79 aa)). A C-terminal domain region spans residues 612 to 674 (KPSGSEPTPK…AAAQPKVAAA (63 aa)).

Belongs to the mitochondrial carrier (TC 2.A.29) family. As to quaternary structure, homodimer (via N-terminus).

Its subcellular location is the mitochondrion inner membrane. It catalyses the reaction L-aspartate(in) + L-glutamate(out) + H(+)(out) = L-aspartate(out) + L-glutamate(in) + H(+)(in). The enzyme catalyses 3-sulfino-L-alanine(out) + L-glutamate(in) + H(+)(in) = 3-sulfino-L-alanine(in) + L-glutamate(out) + H(+)(out). The catalysed reaction is 3-sulfino-L-alanine(out) + L-aspartate(in) = 3-sulfino-L-alanine(in) + L-aspartate(out). L-aspartate and 3-sulfino-L-alanine uptake are both inhibited by glisoxepide. Mitochondrial electrogenic aspartate/glutamate antiporter that favors efflux of aspartate and entry of glutamate and proton within the mitochondria as part of the malate-aspartate shuttle. Also mediates the uptake of L-cysteinesulfinate (3-sulfino-L-alanine) by mitochondria in exchange of L-glutamate and proton. Can also exchange L-cysteinesulfinate with aspartate in their anionic form without any proton translocation. Lacks transport activity towards L-glutamine or gamma-aminobutyric acid (GABA). The protein is Electrogenic aspartate/glutamate antiporter SLC25A12, mitochondrial of Rattus norvegicus (Rat).